Here is a 348-residue protein sequence, read N- to C-terminus: GMP reductase 2 (348 aa).

NADP(+) contacts are provided by residues 26–27 (SR), Lys-78, 129–131 (DVA), and 180–181 (IG). K(+) is bound by residues Gly-181, Gly-183, and Cys-186. The active-site Thioimidate intermediate is the Cys-186. The active-site Proton donor/acceptor is Thr-188. Arg-189 provides a ligand contact to K(+). GMP-binding positions include 219–221 (DGG), 242–243 (GG), 268–270 (GMS), and 286–290 (RASEG). Residues Met-269 and 285–286 (YR) each bind NADP(+). N6-acetyllysine is present on Lys-291. 314-317 (STCT) contributes to the NADP(+) binding site.

Belongs to the IMPDH/GMPR family. GuaC type 1 subfamily. Homotetramer. In terms of tissue distribution, highly expressed in heart, skeletal muscle, kidney, brain, liver, prostate, spleen, placenta, testis and ovary. Low expression in colon, thymus and peripheral blood leukocytes.

It carries out the reaction IMP + NH4(+) + NADP(+) = GMP + NADPH + 2 H(+). Catalyzes the irreversible NADPH-dependent deamination of GMP to IMP. It functions in the conversion of nucleobase, nucleoside and nucleotide derivatives of G to A nucleotides, and in maintaining the intracellular balance of A and G nucleotides. Plays a role in modulating cellular differentiation. This chain is GMP reductase 2, found in Homo sapiens (Human).